The primary structure comprises 409 residues: Odorant receptor 35a (409 aa).

At 1–35 (MVRYVPRFADGQKVKLAWPLAVFRLNHIFWPLDPS) the chain is on the cytoplasmic side. A helical membrane pass occupies residues 36–56 (TGKWGRYLDKVLAVAMSLVFM). The Extracellular segment spans residues 57-64 (QHNDAELR). The helical transmembrane segment at 65-85 (YLRFEASNRNLDAFLTGMPTY) threads the bilayer. Residues 86–139 (LILVEAQFRSLHILLHFEKLQKFLEIFYANIYIDPRKEPEMFRKVDGKMIINRL) lie on the Cytoplasmic side of the membrane. The helical transmembrane segment at 140-160 (VSAMYGAVISLYLIAPVFSII) threads the bilayer. N161 carries N-linked (GlcNAc...) asparagine glycosylation. The Extracellular segment spans residues 161–177 (NQSKDFLYSMIFPFDSD). The helical transmembrane segment at 178 to 198 (PLYIFVPLLLTNVWVGIVIDT) threads the bilayer. At 199 to 273 (MMFGETNLLC…QQLEAQYTVR (75 aa)) the chain is on the cytoplasmic side. Residues 274–294 (VFIMFAFAAGLLCALSFKAYT) form a helical membrane-spanning segment. The Extracellular segment spans residues 295 to 302 (NPMANYIY). A helical membrane pass occupies residues 303–323 (AIWFGAKTVELLSLGQIGSDL). Residues 324–379 (AFTTDSLSTMYYLTHWEQILQYSTNPSENLRLLKLINLAIEMNSKPFYVTGLKYFR) are Cytoplasmic-facing. Residues 380–400 (VSLQAGLKILQASFSYFTFLT) traverse the membrane as a helical segment. At 401-409 (SMQRRQMSN) the chain is on the extracellular side.

This sequence belongs to the insect chemoreceptor superfamily. Heteromeric odorant receptor channel (TC 1.A.69) family. Or1a subfamily. In terms of assembly, interacts with Orco. Complexes exist early in the endomembrane system in olfactory sensory neurons (OSNs), coupling these complexes to the conserved ciliary trafficking pathway. As to expression, expressed in ac3B olfactory sensory neurons in the antenna.

Its subcellular location is the cell membrane. In terms of biological role, odorant receptor which mediates acceptance or avoidance behavior, depending on its substrates. The odorant receptor repertoire encodes a large collection of odor stimuli that vary widely in identity, intensity, and duration. Forms a complex with Orco to form odorant-sensing units, providing sensitive and prolonged odorant signaling and calcium permeability. Involved in the behavioral responses to esters. Involved in the behavioral responses to butanol, pentanol, hexanol, octanol, propyl acetate, and butyl acetate. The sequence is that of Odorant receptor 35a (Or35a) from Drosophila melanogaster (Fruit fly).